Reading from the N-terminus, the 526-residue chain is Phosphoenolpyruvate carboxylase (526 aa).

It belongs to the PEPCase type 2 family. Homotetramer. Mg(2+) serves as cofactor.

It catalyses the reaction oxaloacetate + phosphate = phosphoenolpyruvate + hydrogencarbonate. Its function is as follows. Catalyzes the irreversible beta-carboxylation of phosphoenolpyruvate (PEP) to form oxaloacetate (OAA), a four-carbon dicarboxylic acid source for the tricarboxylic acid cycle. This Methanosarcina mazei (strain ATCC BAA-159 / DSM 3647 / Goe1 / Go1 / JCM 11833 / OCM 88) (Methanosarcina frisia) protein is Phosphoenolpyruvate carboxylase.